A 188-amino-acid chain; its full sequence is Holliday junction branch migration complex subunit RuvA (188 aa).

Residues 1-63 (MIEIIEGIYK…QEDMTIYGFD (63 aa)) form a domain I region. The interval 64-142 (SKVKKETFEK…VVEVNEEMLE (79 aa)) is domain II. A region of interest (flexible linker) is located at residue glutamate 142. The interval 142–188 (EAIEALVSLGYSKTQARNAVSKVLKESPNISNVSKIIKEALKILAKI) is domain III.

It belongs to the RuvA family. In terms of assembly, homotetramer. Forms an RuvA(8)-RuvB(12)-Holliday junction (HJ) complex. HJ DNA is sandwiched between 2 RuvA tetramers; dsDNA enters through RuvA and exits via RuvB. An RuvB hexamer assembles on each DNA strand where it exits the tetramer. Each RuvB hexamer is contacted by two RuvA subunits (via domain III) on 2 adjacent RuvB subunits; this complex drives branch migration. In the full resolvosome a probable DNA-RuvA(4)-RuvB(12)-RuvC(2) complex forms which resolves the HJ.

It localises to the cytoplasm. In terms of biological role, the RuvA-RuvB-RuvC complex processes Holliday junction (HJ) DNA during genetic recombination and DNA repair, while the RuvA-RuvB complex plays an important role in the rescue of blocked DNA replication forks via replication fork reversal (RFR). RuvA specifically binds to HJ cruciform DNA, conferring on it an open structure. The RuvB hexamer acts as an ATP-dependent pump, pulling dsDNA into and through the RuvAB complex. HJ branch migration allows RuvC to scan DNA until it finds its consensus sequence, where it cleaves and resolves the cruciform DNA. The chain is Holliday junction branch migration complex subunit RuvA from Fervidobacterium nodosum (strain ATCC 35602 / DSM 5306 / Rt17-B1).